Consider the following 504-residue polypeptide: MSFSVDVLANIAIELQRGIGHQDRFQRLITTLRQVLECDASALLRYDSRQFIPLAIDGLAKDVLGRRFALEGHPRLEAIARAGDVVRFPADSELPDPYDGLIPGQESLKVHACVGLPLFAGQNLIGALTLDGMQPDQFDVFSDEELRLIAALAAGALSNALLIEQLESQNMLPGDAAPFEAVKQTQMIGLSPGMTQLKKEIEIVAASDLNVLISGETGTGKELVAKAIHEASPRAVNPLVYLNCAALPESVAESELFGHVKGAFTGAISNRSGKFEMADNGTLFLDEIGELSLALQAKLLRVLQYGDIQRVGDDRSLRVDVRVLAATNRDLREEVLAGRFRADLFHRLSVFPLSVPPLRERGDDVILLAGYFCEQCRLRLGLSRVVLSAGARNLLQHYNFPGNVRELEHAIHRAVVLSRATRSGDEVILEAQHFAFPEVTLPPPEAAAVPVVKQNLREATEAFQRETIRQALAQNHHNWAACARMLETDVANLHRLAKRLGLKD.

Asp57 is modified (4-aspartylphosphate). Positions 187–416 constitute a Sigma-54 factor interaction domain; that stretch reads MIGLSPGMTQ…LEHAIHRAVV (230 aa). Residues 215-222 and 278-287 each bind ATP; these read GETGTGKE and ADNGTLFLDE. Residues 479-498 constitute a DNA-binding region (H-T-H motif); it reads WAACARMLETDVANLHRLAK.

The protein operates within nitrogen metabolism; nitric oxide reduction. Required for the expression of anaerobic nitric oxide (NO) reductase, acts as a transcriptional activator for at least the norVW operon. Activation also requires sigma-54. This is Anaerobic nitric oxide reductase transcription regulator NorR from Escherichia coli O45:K1 (strain S88 / ExPEC).